Reading from the N-terminus, the 253-residue chain is Phosphate import ATP-binding protein PstB (253 aa).

An ABC transporter domain is found at 8–248 (IQVRDLDLFY…PRDKRTEDYI (241 aa)). Residue 40-47 (GPSGCGKS) participates in ATP binding.

The protein belongs to the ABC transporter superfamily. Phosphate importer (TC 3.A.1.7) family. As to quaternary structure, the complex is composed of two ATP-binding proteins (PstB), two transmembrane proteins (PstC and PstA) and a solute-binding protein (PstS).

It localises to the cell membrane. The catalysed reaction is phosphate(out) + ATP + H2O = ADP + 2 phosphate(in) + H(+). Functionally, part of the ABC transporter complex PstSACB involved in phosphate import. Responsible for energy coupling to the transport system. The polypeptide is Phosphate import ATP-binding protein PstB (Clostridium perfringens (strain ATCC 13124 / DSM 756 / JCM 1290 / NCIMB 6125 / NCTC 8237 / Type A)).